Consider the following 415-residue polypeptide: Nacrein-like protein F (415 aa).

Asn-27 carries an N-linked (GlcNAc...) asparagine glycan. Positions 33–414 constitute an Alpha-carbonic anhydrase domain; the sequence is AGFSYDRSIC…KNKVTVYKSF (382 aa). Residues His-132, His-134, and His-157 each contribute to the Zn(2+) site. Positions 201 to 297 are disordered; sequence DEPDDEECKH…GENGHKHGCR (97 aa). Residues 207 to 219 show a composition bias toward basic and acidic residues; sequence ECKHILKGHHPDN. Residues 220–289 show a composition bias toward low complexity; sequence NENGNGDNGN…NNGENGNNGE (70 aa). 22 tandem repeats follow at residues 225-227, 228-230, 231-233, 234-236, 237-239, 240-242, 243-245, 246-248, 249-251, 252-254, 255-257, 258-260, 261-263, 264-266, 267-269, 270-272, 273-275, 276-278, 279-281, 282-284, 285-286, and 288-290. Residues 225-290 form a 22 X 3 AA approximate tandem repeats of G-X-N region; sequence GDNGNNGYNG…NGENGNNGEN (66 aa). 355–356 provides a ligand contact to substrate; sequence TT.

The protein belongs to the alpha-carbonic anhydrase family. Homooligomer; disulfide-linked. May also be disulfide-linked to insoluble organic matrix. Zn(2+) is required as a cofactor. In terms of tissue distribution, expressed in the mantle.

It localises to the secreted. It is found in the extracellular space. The protein resides in the extracellular matrix. It carries out the reaction hydrogencarbonate + H(+) = CO2 + H2O. Functionally, acts as a negative regulator for calcification in the shells of mollusks. May function both as a calcium concentrator and as a carbonic anhydrase required for production of carbonate ions, which are assembled to CaCO(3) at mineralization sites. Is important for shell formation in both the calcitic prismatic layer and the aragonitic nacreous layer. Shows inhibitory activity of crystal formation when present in free state but, when attached to the insoluble matrix, may regulate the form and size of aragonite crystal. This Pinctada fucata (Akoya pearl oyster) protein is Nacrein-like protein F.